The sequence spans 726 residues: Catalase-peroxidase (726 aa).

Positions 1–16 (MDNPTDSAGKCPVAHG) are cleaved as a signal peptide. The segment at 1-26 (MDNPTDSAGKCPVAHGNTPRSRSNRD) is disordered. A cross-link (tryptophyl-tyrosyl-methioninium (Trp-Tyr) (with M-244)) is located at residues 96-218 (WHSAGTYRIT…LGAVQMGLIY (123 aa)). The active-site Proton acceptor is the His97. A cross-link (tryptophyl-tyrosyl-methioninium (Tyr-Met) (with W-96)) is located at residues 218 to 244 (YVNPEGPNGTPDPLASARDIRETFARM). Heme b is bound at residue His259.

It belongs to the peroxidase family. Peroxidase/catalase subfamily. As to quaternary structure, homodimer or homotetramer. Heme b is required as a cofactor. Formation of the three residue Trp-Tyr-Met cross-link is important for the catalase, but not the peroxidase activity of the enzyme.

It carries out the reaction H2O2 + AH2 = A + 2 H2O. The enzyme catalyses 2 H2O2 = O2 + 2 H2O. Functionally, bifunctional enzyme with both catalase and broad-spectrum peroxidase activity. This is Catalase-peroxidase from Rhizobium johnstonii (strain DSM 114642 / LMG 32736 / 3841) (Rhizobium leguminosarum bv. viciae).